The following is a 460-amino-acid chain: Tyrosine phenol-lyase (460 aa).

Lys260 bears the N6-(pyridoxal phosphate)lysine mark.

This sequence belongs to the beta-eliminating lyase family. As to quaternary structure, homotetramer. Pyridoxal 5'-phosphate serves as cofactor.

It carries out the reaction L-tyrosine + H2O = phenol + pyruvate + NH4(+). The sequence is that of Tyrosine phenol-lyase from Fusobacterium nucleatum subsp. nucleatum (strain ATCC 25586 / DSM 15643 / BCRC 10681 / CIP 101130 / JCM 8532 / KCTC 2640 / LMG 13131 / VPI 4355).